Reading from the N-terminus, the 258-residue chain is Tropinone reductase-like 3 (258 aa).

Position 19–43 (19–43 (IVTASTQGIGFAIAYRLGLEGAAVV)) interacts with NAD(+). Ser-150 contacts substrate. Residue Tyr-163 is the Proton acceptor of the active site.

The protein belongs to the short-chain dehydrogenases/reductases (SDR) family.

In terms of biological role, has no tropinone reductase activity. This Erythroxylum coca (Coca plant) protein is Tropinone reductase-like 3.